Consider the following 388-residue polypeptide: Staphopain A (388 aa).

An N-terminal signal peptide occupies residues 1–25; sequence MKRNFPKLIALSLILSLSVTPIANA. A propeptide spanning residues 26 to 214 is cleaved from the precursor; that stretch reads ESNSNIKAKD…TSQFKSNNYT (189 aa). Catalysis depends on residues cysteine 238, histidine 334, and asparagine 355.

Belongs to the peptidase C47 family. In terms of assembly, in the cytoplasm, prematurely activated/folded ScpA forms a stable non-covalent complex with ScpB. Cleavage leads to the activation of ScpA probably by an auto-catalytic manner.

Its subcellular location is the secreted. The enzyme catalyses Broad endopeptidase action on proteins including elastin, but rather limited hydrolysis of small-molecule substrates. Assays are conveniently made with hemoglobin, casein or Z-Phe-Arg-NHMec as substrate.. Its activity is regulated as follows. Prematurely activated/folded staphopain A is inhibited by staphostatin A (ScpB), which is probably required to protect staphylococcal cytoplasmic proteins from degradation by ScpA. Cysteine protease that plays an important role in the inhibition of host innate immune response. Cleaves host elastins found in connective tissues, pulmonary surfactant protein A in the lungs, and the chemokine receptor CXCR2 on leukocytes. Proteolytic cleavage of surfactant protein A impairs bacterial phagocytosis by neutrophils while CXCR2 degradation blocks neutrophil activation and chemotaxis. Additionally, promotes vascular leakage by activating the plasma kallikerin/kinin system, resulting in hypotension. This chain is Staphopain A (sspP), found in Staphylococcus aureus (strain MSSA476).